The sequence spans 689 residues: Protein asunder (689 aa).

Residues 521–550 (NGARLKLSKAKDQYRLLYRELEQLIQLNAT) are a coiled coil. Disordered regions lie at residues 591–619 (SPER…SKRR) and 669–689 (KDAV…SVRS). Residues 599 to 614 (SSVGASGSSNSNSLLK) are compositionally biased toward low complexity. The Nuclear localization signal (NLS) signature appears at 613–619 (LKASKRR).

The protein belongs to the Integrator subunit 13 family. As to quaternary structure, belongs to the multiprotein complex Integrator, at least composed of IntS1, IntS2, IntS3, IntS4, omd/IntS5, IntS6, defl/IntS7, IntS8, IntS9, IntS10, IntS11, IntS12, asun/IntS13, IntS14 and IntS15. The core complex associates with protein phosphatase 2A subunits mts/PP2A and Pp2A-29B, to form the Integrator-PP2A (INTAC) complex. Post-translationally, phosphorylated.

The protein localises to the nucleus. The protein resides in the cytoplasm. It localises to the perinuclear region. Its function is as follows. Component of the integrator complex, a multiprotein complex that terminates RNA polymerase II (Pol II) transcription in the promoter-proximal region of genes. The integrator complex provides a quality checkpoint during transcription elongation by driving premature transcription termination of transcripts that are unfavorably configured for transcriptional elongation: the complex terminates transcription by (1) catalyzing dephosphorylation of the C-terminal domain (CTD) of Pol II subunit Polr2A/Rbp1 and Spt5, and (2) degrading the exiting nascent RNA transcript via endonuclease activity. The integrator complex is also involved in the 3'-end processing of the U7 snRNA, and also the spliceosomal snRNAs U1, U2, U4 and U5. This chain is Protein asunder (asun), found in Drosophila simulans (Fruit fly).